A 525-amino-acid chain; its full sequence is MPTSAAVQTDDSLASPFDWPGRPHAAPGFARLGERFLTRLPPVPMPAAPYLVGFSPEAAAPLGLSRAGLDTPAGLDVFVGNAIAAWSDPLATVYSGHQFGVWAGQLGDGRALLLAELQTADGPCEVQLKGAGLTPYSRMGDGRAVLRSSIREFLCSEAMAGLGIPTTRALCVIGADAPVRRETIETAAVVTRLAPSFVRFGHFEHFAANEKLPELRALADFVIDRFYPACRAEPQPYLALLREVGRRTAALIAQWQAVGFCHGVMNTDNMSILGLTLDYGPFGFLDGFDANHICNHSDTGGRYAYAQQPQIAYWNLFCLAQALLPLCGSDPTAFTDLSDEAQAQPAIDAAQEALLVYRDTYGEAFYARYRAKLGLTQAHDGDEALFGDLFKLLHTQRADYTLFFRHLADVRRDDTPAQAQARTVRDVFFDRDSADAWLAAYRQRLQTEPAPDAARAEAMRRVNPKYVLRNHLAEIAIRRAGEKDFSEVENLRAVLARPFDDHPGFEHYAGPAPDWAASLEVSCSS.

8 residues coordinate ATP: Gly107, Gly109, Arg110, Lys129, Asp141, Gly142, Arg192, and Arg199. Residue Asp268 is the Proton acceptor of the active site. 2 residues coordinate Mg(2+): Asn269 and Asp278. Position 278 (Asp278) interacts with ATP.

Belongs to the SELO family. Mg(2+) is required as a cofactor. The cofactor is Mn(2+).

It catalyses the reaction L-seryl-[protein] + ATP = 3-O-(5'-adenylyl)-L-seryl-[protein] + diphosphate. It carries out the reaction L-threonyl-[protein] + ATP = 3-O-(5'-adenylyl)-L-threonyl-[protein] + diphosphate. The enzyme catalyses L-tyrosyl-[protein] + ATP = O-(5'-adenylyl)-L-tyrosyl-[protein] + diphosphate. The catalysed reaction is L-histidyl-[protein] + UTP = N(tele)-(5'-uridylyl)-L-histidyl-[protein] + diphosphate. It catalyses the reaction L-seryl-[protein] + UTP = O-(5'-uridylyl)-L-seryl-[protein] + diphosphate. It carries out the reaction L-tyrosyl-[protein] + UTP = O-(5'-uridylyl)-L-tyrosyl-[protein] + diphosphate. Nucleotidyltransferase involved in the post-translational modification of proteins. It can catalyze the addition of adenosine monophosphate (AMP) or uridine monophosphate (UMP) to a protein, resulting in modifications known as AMPylation and UMPylation. In Ralstonia nicotianae (strain ATCC BAA-1114 / GMI1000) (Ralstonia solanacearum), this protein is Protein nucleotidyltransferase YdiU.